Consider the following 324-residue polypeptide: Elongation factor Ts, mitochondrial (324 aa).

Residues 1–44 (MSLLRSLRFFPVACTGRSARAVLLQPSQPWLTFHAGPSLSSAAS) constitute a mitochondrion transit peptide. Lysine 75, lysine 132, and lysine 191 each carry N6-succinyllysine. A Phosphoserine modification is found at serine 269.

The protein belongs to the EF-Ts family.

Its subcellular location is the mitochondrion. Its function is as follows. Associates with the EF-Tu.GDP complex and induces the exchange of GDP to GTP. It remains bound to the aminoacyl-tRNA.EF-Tu.GTP complex up to the GTP hydrolysis stage on the ribosome. This chain is Elongation factor Ts, mitochondrial (Tsfm), found in Mus musculus (Mouse).